A 92-amino-acid polypeptide reads, in one-letter code: Antifungal protein B (92 aa).

The signal sequence occupies residues 1–18 (MHITSIAIVFFAAMGAVA). The propeptide occupies 19 to 34 (SPIATESDDLDARDVQ). Intrachain disulfides connect C42–C70, C49–C77, and C62–C88.

It belongs to the antifungal protein pafB family.

The protein resides in the secreted. Its subcellular location is the host cytoplasm. In terms of biological role, antifungal protein that acts as an inhibitor of growth of human pathogenic molds and yeasts. This is Antifungal protein B from Penicillium rubens (strain ATCC 28089 / DSM 1075 / NRRL 1951 / Wisconsin 54-1255) (Penicillium chrysogenum).